A 138-amino-acid chain; its full sequence is Ostreolysin A6 (138 aa).

The protein belongs to the aegerolysin family. As to quaternary structure, monomer.

In terms of biological role, has hemolytic activity against bovine erythrocytes at nanomolar concentrations in vitro. Promotes active pleurotolysin B (PlyB)-dependent permeabilization of membranes rich in cholesterol and sphingomyelin. May play an important role in the initial phase of fungal fruiting. This Pleurotus ostreatus (Oyster mushroom) protein is Ostreolysin A6 (OlyA6).